The primary structure comprises 355 residues: Histidine biosynthesis bifunctional protein HisB (355 aa).

The histidinol-phosphatase stretch occupies residues 1-166 (MKQKILFIDR…DITKEIIKRN (166 aa)). Catalysis depends on aspartate 9, which acts as the Nucleophile. 2 residues coordinate Mg(2+): aspartate 9 and aspartate 11. Residue aspartate 11 is the Proton donor of the active site. Residues cysteine 93, histidine 95, cysteine 101, and cysteine 103 each contribute to the Zn(2+) site. Aspartate 130 provides a ligand contact to Mg(2+). Residues 167–355 (RYREVIRETK…NTLPTSKGIL (189 aa)) form an imidazoleglycerol-phosphate dehydratase region.

This sequence in the N-terminal section; belongs to the histidinol-phosphatase family. In the C-terminal section; belongs to the imidazoleglycerol-phosphate dehydratase family. The cofactor is Mg(2+). It depends on Zn(2+) as a cofactor.

It localises to the cytoplasm. The catalysed reaction is D-erythro-1-(imidazol-4-yl)glycerol 3-phosphate = 3-(imidazol-4-yl)-2-oxopropyl phosphate + H2O. The enzyme catalyses L-histidinol phosphate + H2O = L-histidinol + phosphate. It functions in the pathway amino-acid biosynthesis; L-histidine biosynthesis; L-histidine from 5-phospho-alpha-D-ribose 1-diphosphate: step 6/9. The protein operates within amino-acid biosynthesis; L-histidine biosynthesis; L-histidine from 5-phospho-alpha-D-ribose 1-diphosphate: step 8/9. This is Histidine biosynthesis bifunctional protein HisB from Buchnera aphidicola subsp. Schizaphis graminum (strain Sg).